The sequence spans 490 residues: UDP-N-acetylmuramate--L-alanine ligase (490 aa).

ATP is bound at residue 126 to 132 (GTHGKTT).

This sequence belongs to the MurCDEF family.

It is found in the cytoplasm. It carries out the reaction UDP-N-acetyl-alpha-D-muramate + L-alanine + ATP = UDP-N-acetyl-alpha-D-muramoyl-L-alanine + ADP + phosphate + H(+). It participates in cell wall biogenesis; peptidoglycan biosynthesis. In terms of biological role, cell wall formation. The protein is UDP-N-acetylmuramate--L-alanine ligase of Sodalis glossinidius (strain morsitans).